Here is a 673-residue protein sequence, read N- to C-terminus: Probable urea active transporter 2 (673 aa).

A run of 14 helical transmembrane segments spans residues 8–28, 83–103, 132–152, 164–184, 196–218, 249–269, 287–307, 336–356, 391–411, 424–446, 451–471, 492–512, 559–579, and 592–612; these read GYGYGFALGLGAAFALLMAII, IMGGFMYGVGGTIQITLFLFL, VYLFYCISTNVLVSSLLLLGG, TVAACFLLPLGVMVYTTLGGL, VMIYIILIVTCYTVYCSSSLIGS, MMYLTWSVMIGGLSSVFGDPG, LMGGLCWWIIPMALGSSAGLA, IYGMASIFGKSGAAAGLVMLF, QLVRTAHLSVIGFSLFIGALS, LLTFLGIILTPEVSAVTLCLFWN, FSLVVGAPFGTITGVVCWLAS, FVGNIVSMASSPLYIVLLSYI, IGINLFILIGCYVIIPTALLG, and LIIVCLIWILVAAIYIILFPL.

This sequence belongs to the sodium:solute symporter (SSF) (TC 2.A.21) family.

It is found in the endoplasmic reticulum membrane. In terms of biological role, involved in active transport of urea. The chain is Probable urea active transporter 2 (dur3-2) from Schizosaccharomyces pombe (strain 972 / ATCC 24843) (Fission yeast).